The chain runs to 659 residues: Protein NEDD1 (659 aa).

8 WD repeats span residues 1–31 (MQEN…FNPH), 32–71 (TAPH…PVPL), 75–114 (GEGQ…VHRS), 117–156 (DHKD…SSTP), 160–200 (GSNQ…PYHN), 204–244 (THKA…LVKT), 246–285 (VADA…SPIK), and 289–332 (AHKT…SAGG). Phosphothreonine; by PLK1 is present on threonine 382. The tract at residues 383-433 (LSKEAESGKNQDFSNFDDSGKSSLGDMFSPVRDDAVVSKGGDESIGKGDGL) is disordered. Serine 411 is modified (phosphoserine). Residues 413 to 432 (VRDDAVVSKGGDESIGKGDG) show a composition bias toward basic and acidic residues. At serine 426 the chain carries Phosphoserine; by PLK1. Phosphoserine is present on residues serine 468 and serine 515. Positions 508-522 (ETGNLNASPSSNQTR) are enriched in polar residues. Residues 508–531 (ETGNLNASPSSNQTRSPEKFEKPE) are disordered. Phosphothreonine; by CDK1 is present on threonine 549. Serine 636 carries the post-translational modification Phosphoserine; by PLK1.

In terms of assembly, interacts with FAM29A. Interacts with HSPA1A and HSPA1B. Interacts with gamma-tubulin in a HSPA1A/B-dependent manner. Post-translationally, during mitosis, prior phosphorylation on Thr-549 by CDK1 promotes subsequent phosphorylation by PLK1 on Thr-382, Ser-426 and Ser-636. Phosphorylated NEDD1 can interact with gamma-tubulin for targeting the gamma-tubulin ring complex (gTuRC) to the centrosome, an important step for spindle formation.

It is found in the cytoplasm. The protein localises to the cytoskeleton. The protein resides in the microtubule organizing center. It localises to the centrosome. Its function is as follows. Required for mitosis progression. Promotes the nucleation of microtubules from the spindle. This is Protein NEDD1 (NEDD1) from Bos taurus (Bovine).